Consider the following 277-residue polypeptide: Carbonyl reductase [NADPH] 1 (277 aa).

An N-acetylserine modification is found at Ser2. Residues Ser2 and Ser30 each carry the phosphoserine modification. Residues 10 to 34 (VTGA…GDVV), 63 to 64 (DI), and Asn90 each bind NADP(+). Residues 95-97 (FKT) and Gln106 contribute to the glutathione site. A substrate-binding site is contributed by Ser140. Glutathione is bound at residue 193–194 (AY). Tyr194 functions as the Proton acceptor in the catalytic mechanism. NADP(+) contacts are provided by residues 194–198 (YGVTK) and 231–233 (VRT). Position 239 is an N6-1-carboxyethyl lysine (Lys239).

This sequence belongs to the short-chain dehydrogenases/reductases (SDR) family. As to quaternary structure, monomer.

The protein resides in the cytoplasm. It carries out the reaction a secondary alcohol + NADP(+) = a ketone + NADPH + H(+). It catalyses the reaction prostaglandin F2alpha + NADP(+) = prostaglandin E2 + NADPH + H(+). The catalysed reaction is prostaglandin E1 + NADP(+) = 15-oxoprostaglandin E1 + NADPH + H(+). The enzyme catalyses menadione + NADPH + H(+) = menadiol + NADP(+). It carries out the reaction prostaglandin D2 + NADP(+) = 15-oxoprostaglandin D2 + NADPH + H(+). It catalyses the reaction prostaglandin E2 + NADP(+) = 15-oxoprostaglandin E2 + NADPH + H(+). The catalysed reaction is prostaglandin F2alpha + NADP(+) = 15-oxoprostaglandin F2alpha + NADPH + H(+). The enzyme catalyses daunorubicin + NADPH + H(+) = 13-dihydrodaunorubicin + NADP(+). It carries out the reaction S-nitrosoglutathione + NADPH + H(+) = S-(hydroxysulfenamide)glutathione + NADP(+). It catalyses the reaction a primary alcohol + NADP(+) = an aldehyde + NADPH + H(+). The catalysed reaction is cortisol + NADPH + H(+) = 20beta-dihydrocortisol + NADP(+). The enzyme catalyses corticosterone + NADPH + H(+) = 20beta-dihydrocorticosterone + NADP(+). In terms of biological role, NADPH-dependent reductase with broad substrate specificity. Catalyzes the reduction of a wide variety of carbonyl compounds including quinones, prostaglandins, menadione, plus various xenobiotics. Catalyzes the reduction of the antitumor anthracyclines doxorubicin and daunorubicin to the cardiotoxic compounds doxorubicinol and daunorubicinol. Can convert prostaglandin E to prostaglandin F2-alpha. Can bind glutathione, which explains its higher affinity for glutathione-conjugated substrates. Catalyzes the reduction of S-nitrosoglutathione. In addition, participates in the glucocorticoid metabolism by catalyzing the NADPH-dependent cortisol/corticosterone into 20beta-dihydrocortisol (20b-DHF) or 20beta-corticosterone (20b-DHB), which are weak agonists of NR3C1 and NR3C2 in adipose tissue. The protein is Carbonyl reductase [NADPH] 1 of Bos taurus (Bovine).